We begin with the raw amino-acid sequence, 135 residues long: Flagellar assembly factor FliW 1 (135 aa).

Belongs to the FliW family. In terms of assembly, interacts with translational regulator CsrA and flagellin(s).

The protein resides in the cytoplasm. Functionally, acts as an anti-CsrA protein, binds CsrA and prevents it from repressing translation of its target genes, one of which is flagellin. Binds to flagellin and participates in the assembly of the flagellum. This Helicobacter pylori (strain ATCC 700392 / 26695) (Campylobacter pylori) protein is Flagellar assembly factor FliW 1.